The following is a 319-amino-acid chain: Acetyl esterase (319 aa).

The Involved in the stabilization of the negatively charged intermediate by the formation of the oxyanion hole signature appears at 91–93 (HGG). Residues Ser-165, Asp-262, and His-292 contribute to the active site.

The protein belongs to the 'GDXG' lipolytic enzyme family. Homodimer. Interacts with MalT and MelA.

It is found in the cytoplasm. Displays esterase activity towards short chain fatty esters (acyl chain length of up to 8 carbons). Able to hydrolyze triacetylglycerol (triacetin) and tributyrylglycerol (tributyrin), but not trioleylglycerol (triolein) or cholesterol oleate. Negatively regulates MalT activity by antagonizing maltotriose binding. Inhibits MelA galactosidase activity. The chain is Acetyl esterase from Escherichia coli (strain ATCC 8739 / DSM 1576 / NBRC 3972 / NCIMB 8545 / WDCM 00012 / Crooks).